The following is a 324-amino-acid chain: Glucokinase (324 aa).

6–11 contacts ATP; that stretch reads IDIGGT.

The protein belongs to the bacterial glucokinase family.

The protein resides in the cytoplasm. It carries out the reaction D-glucose + ATP = D-glucose 6-phosphate + ADP + H(+). The sequence is that of Glucokinase from Zymomonas mobilis subsp. mobilis (strain ATCC 31821 / ZM4 / CP4).